The chain runs to 203 residues: Twist-related protein 1 (203 aa).

The segment covering 1 to 18 has biased composition (low complexity); it reads MMQDVSSSPVSPADDSLS. Residues 1–106 are disordered; it reads MMQDVSSSPV…GGGSPQSYEE (106 aa). The span at 34 to 43 shows a compositional bias: basic residues; sequence RGGRKRRSSR. 2 stretches are compositionally biased toward gly residues: residues 46 to 65 and 80 to 100; these read AGGGAGPGGAAGGGVGGGDE and GCGGGGGSAGGGGGSSSGGGS. The bHLH domain maps to 109-160; sequence TQRVMANVRERQRTQSLNEAFAALRKIIPTLPSDKLSKIQTLKLAARYIDFL. Residues 162–192 are sufficient for transactivation activity; that stretch reads QVLQSDELDSKMASCSYVAHERLSYAFSVWR.

In terms of assembly, efficient DNA binding requires dimerization with another bHLH protein. Homodimer or heterodimer with E proteins such as TCF3. ID1 binds preferentially to TCF3 but does not interact efficiently with TWIST1 so ID1 levels control the amount of TCF3 available to dimerize with TWIST and thus determine the type of dimer formed.

The protein localises to the nucleus. In terms of biological role, acts as a transcriptional regulator. Inhibits myogenesis by sequestrating E proteins, inhibiting trans-activation by MEF2, and inhibiting DNA-binding by MYOD1 through physical interaction. This interaction probably involves the basic domains of both proteins. Also represses expression of pro-inflammatory cytokines such as TNFA and IL1B. Regulates cranial suture patterning and fusion. Activates transcription as a heterodimer with E proteins. Regulates gene expression differentially, depending on dimer composition. Homodimers induce expression of FGFR2 and POSTN while heterodimers repress FGFR2 and POSTN expression and induce THBS1 expression. Heterodimerization is also required for osteoblast differentiation. Represses the activity of the circadian transcriptional activator: NPAS2-BMAL1 heterodimer. The polypeptide is Twist-related protein 1 (TWIST1) (Saguinus oedipus (Cotton-top tamarin)).